We begin with the raw amino-acid sequence, 67 residues long: Probable Sec-independent protein translocase protein TatE (67 aa).

Residues I4–G21 form a helical membrane-spanning segment.

It belongs to the TatA/E family. TatE subfamily.

Its subcellular location is the cell inner membrane. In terms of biological role, part of the twin-arginine translocation (Tat) system that transports large folded proteins containing a characteristic twin-arginine motif in their signal peptide across membranes. TatE shares overlapping functions with TatA. This chain is Probable Sec-independent protein translocase protein TatE, found in Salmonella arizonae (strain ATCC BAA-731 / CDC346-86 / RSK2980).